The sequence spans 299 residues: Oxygen-dependent coproporphyrinogen-III oxidase (299 aa).

Ser-92 provides a ligand contact to substrate. Positions 96 and 106 each coordinate Mn(2+). His-106 (proton donor) is an active-site residue. 108–110 (NVR) is a substrate binding site. The Mn(2+) site is built by His-145 and His-175. The tract at residues 240 to 275 (YVEFNLVWDRGTLFGLQTGGRTESILMSMPPLVRWE) is important for dimerization. 258 to 260 (GGR) lines the substrate pocket.

It belongs to the aerobic coproporphyrinogen-III oxidase family. As to quaternary structure, homodimer. Mn(2+) is required as a cofactor.

The protein resides in the cytoplasm. The catalysed reaction is coproporphyrinogen III + O2 + 2 H(+) = protoporphyrinogen IX + 2 CO2 + 2 H2O. The protein operates within porphyrin-containing compound metabolism; protoporphyrin-IX biosynthesis; protoporphyrinogen-IX from coproporphyrinogen-III (O2 route): step 1/1. Functionally, involved in the heme biosynthesis. Catalyzes the aerobic oxidative decarboxylation of propionate groups of rings A and B of coproporphyrinogen-III to yield the vinyl groups in protoporphyrinogen-IX. The sequence is that of Oxygen-dependent coproporphyrinogen-III oxidase from Escherichia coli (strain K12 / MC4100 / BW2952).